Here is a 226-residue protein sequence, read N- to C-terminus: 7-cyano-7-deazaguanine synthase (226 aa).

8-18 (LSGGLDSTTVL) provides a ligand contact to ATP. Zn(2+) is bound by residues C190, C198, C201, and C204.

The protein belongs to the QueC family. Homodimer. Requires Zn(2+) as cofactor.

The catalysed reaction is 7-carboxy-7-deazaguanine + NH4(+) + ATP = 7-cyano-7-deazaguanine + ADP + phosphate + H2O + H(+). It functions in the pathway purine metabolism; 7-cyano-7-deazaguanine biosynthesis. In terms of biological role, catalyzes the ATP-dependent conversion of 7-carboxy-7-deazaguanine (CDG) to 7-cyano-7-deazaguanine (preQ(0)). This Clostridium kluyveri (strain ATCC 8527 / DSM 555 / NBRC 12016 / NCIMB 10680 / K1) protein is 7-cyano-7-deazaguanine synthase.